The chain runs to 851 residues: MAKTNISPGMQQYLDIKKDYPDAFLLFRMGDFYELFYEDAVKAAQLLEIGLTSRNKNAENPIPMAGVPHHSAQQYIDVLIELGYKVAVAEQMEDPKQAVGVVKREVVQVITPGTVVDSAKPDSANNFLVAIDFDGCRYGLAYMDVSTGEFCVTDLADFTSVRSEIQNLKAKEVLLGFDLSEEEQTILVKQMNLLLSYEETVYEDKSLIDGQLTTVELTAAGKLLQYVHKTQMRELSHLQALVHYEIKDYLQMSYATKSSLDLVENARTNKKHGSLYWLLDETKTAMGMRLLRSWIDRPLVSKEAILERQEIIQVFLNAFIERTDLSNSLKGVYDIERLSSRVSFGKANPKDLLQLGHTLAQVPYIKAILESFNSAYVDKLVNDIDSLPELEYLIRTAIDPDAPATISEGSIIRNGFDERLDHYRKVMREGTGWIADIEAKERQASGINNLKIDYNKKDGYYFHVTNSNLSLVPDHFFRKATLKNSERYGTAELAKIEGQMLEAREESSSLEYDIFMCIRAQVETYINRLQKLAKILATVDVLQSLAVVAETNHYIRPQFNDNHVITIQEGRHAVVEKVMGVQEYIPNSISFDQQTSIQLITGPNMSGKSTYMRQLALTVIMAQMGSFVAADHVDLPLFDAIFTRIGAADDLISGQSTFMVEMMEANQAIKRASDNSLILFDELGRGTATYDGMALAQAIIEYIHDRVGAKTIFATHYHELTDLSTKLTSLVNVHVATLEKDGDVTFLHKIAEGPADKSYGIHVAKIAGLPKSLLKRADEVLTRLETQSRSTEIMSVPPQVESSSAVRQGQLSLFGDEEKAHEIRQALEAIDVMNMTPLQAMTTLYELKKLL.

Residue 602 to 609 participates in ATP binding; sequence GPNMSGKS.

This sequence belongs to the DNA mismatch repair MutS family.

Its function is as follows. This protein is involved in the repair of mismatches in DNA. It is possible that it carries out the mismatch recognition step. This protein has a weak ATPase activity. In Streptococcus pyogenes serotype M4 (strain MGAS10750), this protein is DNA mismatch repair protein MutS.